Consider the following 290-residue polypeptide: Poly-beta-1,6-N-acetyl-D-glucosamine N-deacetylase (290 aa).

The first 28 residues, 1-28, serve as a signal peptide directing secretion; sequence MKYRKLIILVLSILIILPVSTLDGHHIA. Positions 114–290 constitute a NodB homology domain; that stretch reads RSVWINFDDM…KRWDGFHEKD (177 aa).

This sequence belongs to the polysaccharide deacetylase family.

It localises to the secreted. The protein resides in the cell wall. Its function is as follows. Catalyzes the N-deacetylation of poly-beta-1,6-N-acetyl-D-glucosamine (PNAG, also referred to as PIA), a biofilm adhesin polysaccharide. N-deacetylation is crucial for attachment of the polysaccharide to the bacterial cell surface; it leads to the introduction of positive charges in the otherwise neutral PIA polymer, allowing electrostatic interactions. The protein is Poly-beta-1,6-N-acetyl-D-glucosamine N-deacetylase (icaB) of Staphylococcus aureus (strain MRSA252).